A 183-amino-acid polypeptide reads, in one-letter code: Potassium-transporting ATPase KdpC subunit (183 aa).

Residues 11–31 (LILLLAVVTGALYPLAVTGVA) form a helical membrane-spanning segment.

It belongs to the KdpC family. In terms of assembly, the system is composed of three essential subunits: KdpA, KdpB and KdpC.

The protein resides in the cell inner membrane. Its function is as follows. Part of the high-affinity ATP-driven potassium transport (or Kdp) system, which catalyzes the hydrolysis of ATP coupled with the electrogenic transport of potassium into the cytoplasm. This subunit acts as a catalytic chaperone that increases the ATP-binding affinity of the ATP-hydrolyzing subunit KdpB by the formation of a transient KdpB/KdpC/ATP ternary complex. The sequence is that of Potassium-transporting ATPase KdpC subunit from Pseudomonas putida (strain W619).